The sequence spans 96 residues: Large ribosomal subunit protein eL43 (96 aa).

The segment at cysteine 41–cysteine 62 adopts a C4-type zinc-finger fold.

The protein belongs to the eukaryotic ribosomal protein eL43 family. The cofactor is Zn(2+).

The protein is Large ribosomal subunit protein eL43 of Methanococcus aeolicus (strain ATCC BAA-1280 / DSM 17508 / OCM 812 / Nankai-3).